The following is a 472-amino-acid chain: Methanethiol oxidase (472 aa).

This sequence belongs to the selenium-binding protein family.

The protein localises to the nucleus. The protein resides in the cytoplasm. Its subcellular location is the cytosol. It localises to the membrane. It carries out the reaction methanethiol + O2 + H2O = hydrogen sulfide + formaldehyde + H2O2 + H(+). It functions in the pathway organosulfur degradation. Its function is as follows. Catalyzes the oxidation of methanethiol, an organosulfur compound known to be produced in substantial amounts by gut bacteria. Selenium-binding protein which may be involved in the sensing of reactive xenobiotics in the cytoplasm. May be involved in intra-Golgi protein transport. In Xenopus laevis (African clawed frog), this protein is Methanethiol oxidase (selenbp1-a).